Here is a 401-residue protein sequence, read N- to C-terminus: Nicotinate phosphoribosyltransferase (401 aa).

His-221 bears the Phosphohistidine; by autocatalysis mark.

It belongs to the NAPRTase family. Transiently phosphorylated on a His residue during the reaction cycle. Phosphorylation strongly increases the affinity for substrates and increases the rate of nicotinate D-ribonucleotide production. Dephosphorylation regenerates the low-affinity form of the enzyme, leading to product release.

The catalysed reaction is nicotinate + 5-phospho-alpha-D-ribose 1-diphosphate + ATP + H2O = nicotinate beta-D-ribonucleotide + ADP + phosphate + diphosphate. It functions in the pathway cofactor biosynthesis; NAD(+) biosynthesis; nicotinate D-ribonucleotide from nicotinate: step 1/1. Functionally, catalyzes the synthesis of beta-nicotinate D-ribonucleotide from nicotinate and 5-phospho-D-ribose 1-phosphate at the expense of ATP. The sequence is that of Nicotinate phosphoribosyltransferase from Edwardsiella ictaluri (strain 93-146).